A 368-amino-acid polypeptide reads, in one-letter code: Propane 2-monooxygenase, hydroxylase component small subunit (368 aa).

Basic and acidic residues predominate over residues 1 to 17; that stretch reads MSAPEKPRERSFPKIEF. The tract at residues 1 to 32 is disordered; sequence MSAPEKPRERSFPKIEFTDSEAGAKEFPSSKS.

The protein belongs to the TmoE/XamoE family. The propane 2-monooxygenase multicomponent enzyme system is composed of an electron transfer component and a monooxygenase component interacting with the effector protein MimD. The electron transfer component is composed of a reductase (MimB), and the monooxygenase component is formed by a large subunit (MimA) and a small subunit (MimC). Requires the presence of the chaperonin-like protein MimG to ensure a productive folding, resulting of a soluble MimC, which leads to the active form of MimABCD.

It catalyses the reaction propane + NADH + O2 + H(+) = propan-2-ol + NAD(+) + H2O. The enzyme catalyses acetone + NADH + O2 + H(+) = hydroxyacetone + NAD(+) + H2O. The catalysed reaction is butan-2-one + NADH + O2 + H(+) = 1-hydroxy-2-butanone + NAD(+) + H2O. It carries out the reaction phenol + NADH + O2 + H(+) = hydroquinone + NAD(+) + H2O. Its function is as follows. Component of the propane 2-monooxygenase multicomponent enzyme system which is involved in the degradation of propane via the O2-dependent hydroxylation of propane. Also involved in the degradation of acetone via the O2-dependent hydroxylation of acetone. Also able to catalyze the oxidation of phenol, methylethylketone (2-butanone), 1-propanol and 2-propanol. The polypeptide is Propane 2-monooxygenase, hydroxylase component small subunit (Mycolicibacterium smegmatis (strain ATCC 700084 / mc(2)155) (Mycobacterium smegmatis)).